A 167-amino-acid polypeptide reads, in one-letter code: Elafin (167 aa).

The signal sequence occupies residues 1 to 21; the sequence is MRSRSFLVLVVVFLICGTLVA. Residues 22 to 70 constitute a propeptide that is removed on maturation; sequence QAAGRIRRPKGKGTKKILALVKGQGPVRGKDQVKGQGPVKGQDLGKSQD. A run of 12 repeats spans residues 44-49, 50-55, 56-61, 62-67, 68-73, 74-79, 80-85, 86-91, 92-97, 98-103, 104-109, and 110-115. The tract at residues 44–115 is 12 X 6 AA tandem repeats of [GSAL]-[QEK]-[DGLP]-[APSLQ]-[VGDFI]-[KR]; sequence GQGPVRGKDQ…DPVKAQPAIK (72 aa). The tract at residues 46 to 104 is disordered; that stretch reads GPVRGKDQVKGQGPVKGQDLGKSQDPVKAQLPDKGQDLGKGEDSVKGQDPFKAQLPDKL. The 2 X tandem repeats of SVP-1 like motif stretch occupies residues 78–126; sequence DKGQDLGKGEDSVKGQDPFKAQLPDKLQDPVKAQPAIKRLILLTKPGSC. Residues 79–91 are compositionally biased toward basic and acidic residues; that stretch reads KGQDLGKGEDSVK. SVP-1 clotting repeat units lie at residues 80 to 101 and 104 to 126; these read GQDL…AQLP and LQDP…PGSC. The 49-residue stretch at 119–167 folds into the WAP domain; that stretch reads LLTKPGSCPRILIRCLMVNPPNRCLSDAQCPGLKKCCEGFCGKACMDPK. Intrachain disulfides connect Cys-126/Cys-155, Cys-133/Cys-159, Cys-142/Cys-154, and Cys-148/Cys-163.

Trachea and large intestine.

Functionally, neutrophil and pancreatic elastase-specific inhibitor of skin. It may prevent elastase-mediated tissue proteolysis. In Sus scrofa (Pig), this protein is Elafin.